A 260-amino-acid polypeptide reads, in one-letter code: Thrombin-like enzyme flavoxobin (260 aa).

Residues 1-18 (MVLIRVLANLLILQLSYA) form the signal peptide. Positions 19 to 24 (QKSSEL) are excised as a propeptide. The region spanning 25–251 (VIGGDECNIN…YNAWIQSIIA (227 aa)) is the Peptidase S1 domain. 6 cysteine pairs are disulfide-bonded: cysteine 31-cysteine 165, cysteine 52-cysteine 68, cysteine 100-cysteine 258, cysteine 144-cysteine 212, cysteine 176-cysteine 191, and cysteine 202-cysteine 227. Residues histidine 67 and aspartate 112 each act as charge relay system in the active site. Residue serine 206 is the Charge relay system of the active site.

Belongs to the peptidase S1 family. Snake venom subfamily. Monomer. In terms of tissue distribution, expressed by the venom gland.

It localises to the secreted. It carries out the reaction Selective cleavage of Arg-|-Xaa bond in fibrinogen, to form fibrin, and release fibrinopeptide A. The specificity of further degradation of fibrinogen varies with species origin of the enzyme.. Inhibited by alpha(2)-macroglobulin, diisopropylfluorophosphate (DFP) and PMSF. Low inhibition by tosyl-L-lysine chloromethyl ketone. In terms of biological role, thrombin-like snake venom serine protease that clots fibrinogen (FGA) by releasing fibrinopeptide A. According to PubMed:8585090, only cleaves rabbit fibrinogen, whereas no specificity is described in PubMed:3910643 (tests done on bovine fibrinogen). Also acts as a C3 convertase that independently cleaves human C3 and kick-starts the complement cascade. Also increases urokinase-type plasminogen activator (PLAU) and plasminogen activator inhibitor (SERPINE1) in cultured bovine pulmonary artery endothelial cells. Dose-dependently inhibits collagen-induced platelet aggregation. The polypeptide is Thrombin-like enzyme flavoxobin (TLF1) (Protobothrops flavoviridis (Habu)).